We begin with the raw amino-acid sequence, 353 residues long: uncharacterized protein (353 aa).

A signal peptide spans 1-20 (MLMRSVCFILLAVLLFSLSA). A lipid anchor (N-palmitoyl cysteine) is attached at C21. A lipid anchor (S-diacylglycerol cysteine) is attached at C21.

It is found in the cell membrane. This is an uncharacterized protein from Bacillus subtilis (strain 168).